Reading from the N-terminus, the 174-residue chain is Large ribosomal subunit protein uL22 (174 aa).

Belongs to the universal ribosomal protein uL22 family. Part of the 50S ribosomal subunit.

Functionally, this protein binds specifically to 23S rRNA. It makes multiple contacts with different domains of the 23S rRNA in the assembled 50S subunit and ribosome. The globular domain of the protein is located near the polypeptide exit tunnel on the outside of the subunit, while an extended beta-hairpin is found that lines the wall of the exit tunnel in the center of the 70S ribosome. This Nanoarchaeum equitans (strain Kin4-M) protein is Large ribosomal subunit protein uL22.